The following is a 359-amino-acid chain: 3-isopropylmalate dehydrogenase (359 aa).

76–89 (GPKWDTIERSIRPE) serves as a coordination point for NAD(+). 4 residues coordinate substrate: Arg96, Arg106, Arg134, and Asp225. Positions 225, 249, and 253 each coordinate Mg(2+). 283 to 295 (GSAPDIAGQNVAN) is a binding site for NAD(+).

The protein belongs to the isocitrate and isopropylmalate dehydrogenases family. LeuB type 1 subfamily. Homodimer. It depends on Mg(2+) as a cofactor. Mn(2+) is required as a cofactor.

The protein resides in the cytoplasm. It carries out the reaction (2R,3S)-3-isopropylmalate + NAD(+) = 4-methyl-2-oxopentanoate + CO2 + NADH. Its pathway is amino-acid biosynthesis; L-leucine biosynthesis; L-leucine from 3-methyl-2-oxobutanoate: step 3/4. Catalyzes the oxidation of 3-carboxy-2-hydroxy-4-methylpentanoate (3-isopropylmalate) to 3-carboxy-4-methyl-2-oxopentanoate. The product decarboxylates to 4-methyl-2 oxopentanoate. This chain is 3-isopropylmalate dehydrogenase, found in Acinetobacter baylyi (strain ATCC 33305 / BD413 / ADP1).